Here is a 142-residue protein sequence, read N- to C-terminus: Large ribosomal subunit protein uL13 (142 aa).

This sequence belongs to the universal ribosomal protein uL13 family. Part of the 50S ribosomal subunit.

In terms of biological role, this protein is one of the early assembly proteins of the 50S ribosomal subunit, although it is not seen to bind rRNA by itself. It is important during the early stages of 50S assembly. The polypeptide is Large ribosomal subunit protein uL13 (Vibrio campbellii (strain ATCC BAA-1116)).